We begin with the raw amino-acid sequence, 161 residues long: SsrA-binding protein (161 aa).

The protein belongs to the SmpB family.

It is found in the cytoplasm. Required for rescue of stalled ribosomes mediated by trans-translation. Binds to transfer-messenger RNA (tmRNA), required for stable association of tmRNA with ribosomes. tmRNA and SmpB together mimic tRNA shape, replacing the anticodon stem-loop with SmpB. tmRNA is encoded by the ssrA gene; the 2 termini fold to resemble tRNA(Ala) and it encodes a 'tag peptide', a short internal open reading frame. During trans-translation Ala-aminoacylated tmRNA acts like a tRNA, entering the A-site of stalled ribosomes, displacing the stalled mRNA. The ribosome then switches to translate the ORF on the tmRNA; the nascent peptide is terminated with the 'tag peptide' encoded by the tmRNA and targeted for degradation. The ribosome is freed to recommence translation, which seems to be the essential function of trans-translation. This is SsrA-binding protein from Vesicomyosocius okutanii subsp. Calyptogena okutanii (strain HA).